A 307-amino-acid polypeptide reads, in one-letter code: GTPase Era (307 aa).

The Era-type G domain occupies 17-186; it reads RCGFVAIVGR…LELIKPYLPE (170 aa). A G1 region spans residues 25–32; it reads GRPNVGKS. A GTP-binding site is contributed by 25–32; the sequence is GRPNVGKS. Residues 51-55 are G2; it reads QTTRN. Positions 72-75 are G3; it reads DTPG. Residues 72–76 and 133–136 each bind GTP; these read DTPGF and NKID. Residues 133–136 form a G4 region; the sequence is NKID. Positions 165–167 are G5; sequence VSA. Residues 217-293 form the KH type-2 domain; that stretch reads LGEELPYAMN…FLKVWVKVKS (77 aa).

This sequence belongs to the TRAFAC class TrmE-Era-EngA-EngB-Septin-like GTPase superfamily. Era GTPase family. Monomer.

Its subcellular location is the cytoplasm. It localises to the cell inner membrane. Functionally, an essential GTPase that binds both GDP and GTP, with rapid nucleotide exchange. Plays a role in 16S rRNA processing and 30S ribosomal subunit biogenesis and possibly also in cell cycle regulation and energy metabolism. The chain is GTPase Era from Neisseria meningitidis serogroup A / serotype 4A (strain DSM 15465 / Z2491).